The primary structure comprises 86 residues: 4-hydroxyphenylacetate decarboxylase small subunit (86 aa).

[4Fe-4S] cluster is bound by residues histidine 3, cysteine 6, cysteine 19, cysteine 36, cysteine 45, cysteine 48, cysteine 62, and cysteine 80.

The protein belongs to the HPA decarboxylase small subunit family. In terms of assembly, heterooctamer consisting of 4 large (HpdB) subunits and 4 small (HpdC) subunits, arranged as a tetramer of heterodimers. It depends on [4Fe-4S] cluster as a cofactor.

It carries out the reaction 4-hydroxyphenylacetate + H(+) = 4-methylphenol + CO2. The catalysed reaction is 3,4-dihydroxyphenylacetate + H(+) = 4-methylcatechol + CO2. Functionally, component of the HPA decarboxylase that decarboxylates phenylacetates with a hydroxyl group in the p-position. Active toward 4-hydroxyphenylacetate and 3,4-dihydroxyphenylacetate, forming 4-methylphenol and 4-methylcatechol, respectively. Is likely involved in the catabolism of aromatic amino acids such as tyrosine fermentation. 4-methylphenol (p-cresol) formation provides metabolic toxicity, which allows an active suppression of other microbes and may provide growth advantages for the producers in highly competitive environments. The small subunit is essential for enzymatic activity of HPA decarboxylase, and also seems to be involved in the regulation of the enzyme oligomeric state and catalytic activity. The polypeptide is 4-hydroxyphenylacetate decarboxylase small subunit (Clostridium scatologenes).